The chain runs to 139 residues: Acidic phospholipase A2 Tgc-E6 (139 aa).

A signal peptide spans 1–16 (MRTLWIMAVLLLGVEG). Intrachain disulfides connect Cys-42–Cys-132, Cys-44–Cys-60, Cys-59–Cys-111, Cys-65–Cys-139, Cys-66–Cys-104, Cys-73–Cys-97, and Cys-91–Cys-102. The Ca(2+) site is built by Tyr-43, Gly-45, and Gly-47. His-63 is a catalytic residue. Asp-64 is a Ca(2+) binding site. Asp-105 is an active-site residue.

It belongs to the phospholipase A2 family. Group II subfamily. D49 sub-subfamily. In terms of assembly, monomer. Requires Ca(2+) as cofactor. In terms of tissue distribution, expressed by the venom gland.

It localises to the secreted. The catalysed reaction is a 1,2-diacyl-sn-glycero-3-phosphocholine + H2O = a 1-acyl-sn-glycero-3-phosphocholine + a fatty acid + H(+). Functionally, snake venom phospholipase A2 (PLA2) that inhibits the ADP-(IC(50)=272 nM) and collagen-induced (IC(50)=518 nM) human platelet aggregation in platelet rich plasma. Exhibits very high hydrolytic activities toward the synthetic lecithin, and prefers the anionic micelles (dPPC with deoxycholate) to the zwitterionic micelles (dPPC with Triton X-100). PLA2 catalyzes the calcium-dependent hydrolysis of the 2-acyl groups in 3-sn-phosphoglycerides. This Trimeresurus gracilis (Kikuchi habu) protein is Acidic phospholipase A2 Tgc-E6.